Consider the following 497-residue polypeptide: Signal recognition particle subunit SRP54 2 (497 aa).

The tract at residues 1–297 (MVLAELGGRI…DAKPFVSRLL (297 aa)) is G-domain. GTP contacts are provided by residues 108–117 (GLQGEVLEKP), 192–196 (DTSGR), and 250–253 (TKMD). The M-domain stretch occupies residues 298-497 (GNGDMSGFVN…LMGMFGGRDE (200 aa)).

It belongs to the GTP-binding SRP family. SRP54 subfamily. As to quaternary structure, component of a signal recognition particle (SRP) complex that consists of a 7SL RNA molecule of 300 nucleotides and six protein subunits: SRP72, SRP68, SRP54, SRP19, SRP14 and SRP9.

The protein resides in the cytoplasm. It localises to the endoplasmic reticulum. The enzyme catalyses GTP + H2O = GDP + phosphate + H(+). Component of the signal recognition particle (SRP) complex, a ribonucleoprotein complex that mediates the cotranslational targeting of secretory and membrane proteins to the endoplasmic reticulum (ER). As part of the SRP complex, associates with the SRP receptor (SR) component SRPRA to target secretory proteins to the endoplasmic reticulum membrane. Binds to the signal sequence of presecretory proteins when they emerge from the ribosomes. Displays basal GTPase activity, and stimulates reciprocal GTPase activation of the SR subunit SRPRA. Forms a guanosine 5'-triphosphate (GTP)-dependent complex with the SR subunit SRPRA. SR compaction and GTPase mediated rearrangement of SR drive SRP-mediated cotranslational protein translocation into the ER. Requires the presence of SRP9/SRP14 and/or SRP19 to stably interact with RNA. In Arabidopsis thaliana (Mouse-ear cress), this protein is Signal recognition particle subunit SRP54 2 (SRP-54B).